We begin with the raw amino-acid sequence, 272 residues long: Acyl-[acyl-carrier-protein]--UDP-N-acetylglucosamine O-acyltransferase (272 aa).

It belongs to the transferase hexapeptide repeat family. LpxA subfamily. Homotrimer.

Its subcellular location is the cytoplasm. It carries out the reaction a (3R)-hydroxyacyl-[ACP] + UDP-N-acetyl-alpha-D-glucosamine = a UDP-3-O-[(3R)-3-hydroxyacyl]-N-acetyl-alpha-D-glucosamine + holo-[ACP]. It participates in glycolipid biosynthesis; lipid IV(A) biosynthesis; lipid IV(A) from (3R)-3-hydroxytetradecanoyl-[acyl-carrier-protein] and UDP-N-acetyl-alpha-D-glucosamine: step 1/6. In terms of biological role, involved in the biosynthesis of lipid A, a phosphorylated glycolipid that anchors the lipopolysaccharide to the outer membrane of the cell. The protein is Acyl-[acyl-carrier-protein]--UDP-N-acetylglucosamine O-acyltransferase of Rhizobium leguminosarum bv. trifolii (strain WSM2304).